The chain runs to 227 residues: MGNIRETFFKKTCSEEIQLVLASASPRRLALLAQIGLDPHQVYATNIDETPKLREHPANLAKRLAKEKALKAQETFLWCNQNGKSNASAQKIVILAADTVVAVGRVILPKPESEDQAYECLRFLSGRSHKVYGAVCALNECGKITVKLVESRVRFRRLTSSLMEAYLNSGEWEGKAGGYAIQGKASAFVVHIAGSYSNVVGLPLAETMDLLTAYQYPLLSNWVAKTL.

D98 serves as the catalytic Proton acceptor.

Belongs to the Maf family. YhdE subfamily. A divalent metal cation is required as a cofactor.

The protein resides in the cytoplasm. The enzyme catalyses dTTP + H2O = dTMP + diphosphate + H(+). It catalyses the reaction UTP + H2O = UMP + diphosphate + H(+). Its function is as follows. Nucleoside triphosphate pyrophosphatase that hydrolyzes dTTP and UTP. May have a dual role in cell division arrest and in preventing the incorporation of modified nucleotides into cellular nucleic acids. The polypeptide is dTTP/UTP pyrophosphatase (Bartonella quintana (strain Toulouse) (Rochalimaea quintana)).